A 226-amino-acid chain; its full sequence is Cytidylate kinase (226 aa).

ATP is bound at residue 12 to 20 (GPSGAGKGT).

The protein belongs to the cytidylate kinase family. Type 1 subfamily.

It localises to the cytoplasm. It catalyses the reaction CMP + ATP = CDP + ADP. The enzyme catalyses dCMP + ATP = dCDP + ADP. This chain is Cytidylate kinase, found in Xanthomonas campestris pv. campestris (strain 8004).